The sequence spans 378 residues: Mannitol-1-phosphate 5-dehydrogenase (378 aa).

Position 4 to 15 (4 to 15 (SVHFGAGNIGRG)) interacts with NAD(+).

The protein belongs to the mannitol dehydrogenase family.

The enzyme catalyses D-mannitol 1-phosphate + NAD(+) = beta-D-fructose 6-phosphate + NADH + H(+). This Streptococcus pneumoniae (strain JJA) protein is Mannitol-1-phosphate 5-dehydrogenase.